The chain runs to 311 residues: MSTFSLKIIRVGITVLVVVLAVIAIFNVWAFYTESPWTRDAKFTADVVAIAPDVSGLLTEVPVKDNQLVQKGQILFVIDQPRYQQALAEAEADVAYYQTLAAEKQRESSRRHRLGIQALSQEEIDQASNVLQTVQHQLAKAIAVRDLARLDLERTTVRAPAEGWVTNLNVHAGEFINRGATAVALVKKDTFYILAYLEETKLEGVKPGYRAEITPLGSNRILHGTVDSISAGVTNSSSSADSKGLATIDNNLEWVRLAQRVPVKIHLDSEDQQYLYPAGTTATVVITGPNDRDPHQVSPMTKLMHRLREFG.

The chain crosses the membrane as a helical span at residues 11–31 (VGITVLVVVLAVIAIFNVWAF).

It belongs to the membrane fusion protein (MFP) (TC 8.A.1) family.

It is found in the cell inner membrane. Its function is as follows. Forms an efflux pump with AaeB. The chain is p-hydroxybenzoic acid efflux pump subunit AaeA from Yersinia pseudotuberculosis serotype O:3 (strain YPIII).